A 173-amino-acid polypeptide reads, in one-letter code: Ribosome maturation factor RimM (173 aa).

Positions 97–170 (EHEYYYHEII…RIRVHIMEGL (74 aa)) constitute a PRC barrel domain.

It belongs to the RimM family. In terms of assembly, binds ribosomal protein uS19.

It is found in the cytoplasm. Functionally, an accessory protein needed during the final step in the assembly of 30S ribosomal subunit, possibly for assembly of the head region. Essential for efficient processing of 16S rRNA. May be needed both before and after RbfA during the maturation of 16S rRNA. It has affinity for free ribosomal 30S subunits but not for 70S ribosomes. The sequence is that of Ribosome maturation factor RimM from Shouchella clausii (strain KSM-K16) (Alkalihalobacillus clausii).